A 160-amino-acid chain; its full sequence is MSRRHVAEKRIILPDMKYNSILLSRFINNIMKAGKKAVAEKIVYSALNKIEKKHSVDPYQTFNNAMHNVKPHLEVTSVRVGGANYQVPTHVDERRGYALASRWIINAASKRSEKMMIDKLAEELFEASNNRGVAIKKKEDTHKMAEANKAFSHFSPKKMK.

Belongs to the universal ribosomal protein uS7 family. Part of the 30S ribosomal subunit. Contacts proteins S9 and S11.

Functionally, one of the primary rRNA binding proteins, it binds directly to 16S rRNA where it nucleates assembly of the head domain of the 30S subunit. Is located at the subunit interface close to the decoding center, probably blocks exit of the E-site tRNA. This Rickettsia prowazekii (strain Madrid E) protein is Small ribosomal subunit protein uS7.